The following is a 757-amino-acid chain: MDVNPTLLFLKVPAQNAISTTFPYTGDPPYSHGTGTGYTMDTVNRTHQYSERGKWTTNTETGAPQLNPIDGPLPKDNEPSGYAQTDCVLEAMAFLEGSHPGIFENSCLETMEVVQQTRVDKLTQGRQTYDWTLNRNQPAATALANTIEVFRSNGLTANESGRLIDFLKDVMESMDKEEMEIITHFQRKRRVRDNMTKKMITQRTIGKKKQRLNKRSYLIRALTLNTMTKDAERGKLKRRAIATPGMQIRGFVYFVETLARSICEKLEQSGLPVGGNEKKAKLANVVRKMMTNSQDTELSFTITGDNTKWNENQNPRMFLAMITYITRNQPEWFRNVLSIAPIMFSNKMARLGKGYMFESKSMKLRTQIPAEMLASIDLKYFNESTRKKIEKIRPLLIDGTASLSPGMMMGMFNMLSTVLGVSILNLGQKRYTKTTYWWDGLQSSDDFALIVNAPNHEGIQAGVDRFYRTCKLVGINMSKKKSYINRTGTFEFTSFFYRYGFVANFSMELPSFGVSGINESADMSIGVTVIKNNMINNDLGPATAQMALQLFIKDYRYTYRCHRGDTQIQTRRSFELKKLWEQTRSKAGLLVSDGGPNLYNIRNLHIPEVCLKWELMDEDYQGRLCNPLNPFISHKEIESVNNAVVMPAHGPAKSMEYDAVATTHSWIPKRNRSILNTSQRGILEDEQMYQKCCNLFEKFFPSSSYRRPVGISSMVEAMVSRARIDARIDFESGRIKKEEFAEIMKICFTIEELRRQK.

Residues 53–82 (GKWTTNTETGAPQLNPIDGPLPKDNEPSGY) are disordered. Residues 55–64 (WTTNTETGAP) show a composition bias toward polar residues. Short sequence motifs (nuclear localization signal) lie at residues 187 to 195 (RKRRVRDNM) and 203 to 216 (RTIG…NKRS). The interval 249 to 256 (RGFVYFVE) is promoter-binding site. The 198-residue stretch at 286 to 483 (VRKMMTNSQD…GINMSKKKSY (198 aa)) folds into the RdRp catalytic domain.

Belongs to the influenza viruses polymerase PB1 family. Influenza RNA polymerase is composed of three subunits: PB1, PB2 and PA. Interacts (via N-terminus) with PA (via C-terminus). Interacts (via C-terminus) with PB2 (via N-terminus); this interaction is essential for transcription initiation. In terms of processing, phosphorylated by host PRKCA.

Its subcellular location is the host nucleus. The protein resides in the host cytoplasm. It catalyses the reaction RNA(n) + a ribonucleoside 5'-triphosphate = RNA(n+1) + diphosphate. In terms of biological role, RNA-dependent RNA polymerase which is responsible for replication and transcription of virus RNA segments. The transcription of viral mRNAs occurs by a unique mechanism called cap-snatching. 5' methylated caps of cellular mRNAs are cleaved after 10-13 nucleotides by PA. In turn, these short capped RNAs are used as primers by PB1 for transcription of viral mRNAs. During virus replication, PB1 initiates RNA synthesis and copy vRNA into complementary RNA (cRNA) which in turn serves as a template for the production of more vRNAs. In Influenza A virus (strain A/Duck/Czechoslovakia/1956 H4N6), this protein is RNA-directed RNA polymerase catalytic subunit.